Here is a 473-residue protein sequence, read N- to C-terminus: 3-isopropylmalate dehydratase large subunit (473 aa).

Residues C351, C414, and C417 each coordinate [4Fe-4S] cluster.

This sequence belongs to the aconitase/IPM isomerase family. LeuC type 1 subfamily. In terms of assembly, heterodimer of LeuC and LeuD. Requires [4Fe-4S] cluster as cofactor.

It catalyses the reaction (2R,3S)-3-isopropylmalate = (2S)-2-isopropylmalate. Its pathway is amino-acid biosynthesis; L-leucine biosynthesis; L-leucine from 3-methyl-2-oxobutanoate: step 2/4. Catalyzes the isomerization between 2-isopropylmalate and 3-isopropylmalate, via the formation of 2-isopropylmaleate. The protein is 3-isopropylmalate dehydratase large subunit of Acidovorax sp. (strain JS42).